A 120-amino-acid polypeptide reads, in one-letter code: MVQRLVYRSRHSYATKSNQHRIVKTPGGKLVYQTTKKRASGPKCPVTGKRIQGIPHLRPSEYKRSRLSRNRRTVNRAYGGVLSGSAVRERIIRAFLVEEQKIVKKVLKLQKAKEKVAPKA.

Positions 31 to 51 (VYQTTKKRASGPKCPVTGKRI) are disordered.

This sequence belongs to the eukaryotic ribosomal protein eL34 family.

The sequence is that of Large ribosomal subunit protein eL34z (RPL34A) from Arabidopsis thaliana (Mouse-ear cress).